Consider the following 827-residue polypeptide: Glycerol-3-phosphate acyltransferase (827 aa).

The short motif at 325–330 (CHRSHM) is the HXXXXD motif element.

It belongs to the GPAT/DAPAT family.

The protein localises to the cell inner membrane. It carries out the reaction sn-glycerol 3-phosphate + an acyl-CoA = a 1-acyl-sn-glycero-3-phosphate + CoA. The protein operates within phospholipid metabolism; CDP-diacylglycerol biosynthesis; CDP-diacylglycerol from sn-glycerol 3-phosphate: step 1/3. This Shigella sonnei (strain Ss046) protein is Glycerol-3-phosphate acyltransferase.